Consider the following 425-residue polypeptide: Phosphoribosylamine--glycine ligase (425 aa).

One can recognise an ATP-grasp domain in the interval 109-315; the sequence is KALMQEAGIP…LEELILACVQ (207 aa). 135–195 provides a ligand contact to ATP; it reads IQAQGAPIVV…EECLTGQEVS (61 aa). The Mg(2+) site is built by E285 and N287.

The protein belongs to the GARS family. The cofactor is Mg(2+). Mn(2+) serves as cofactor.

The enzyme catalyses 5-phospho-beta-D-ribosylamine + glycine + ATP = N(1)-(5-phospho-beta-D-ribosyl)glycinamide + ADP + phosphate + H(+). It functions in the pathway purine metabolism; IMP biosynthesis via de novo pathway; N(1)-(5-phospho-D-ribosyl)glycinamide from 5-phospho-alpha-D-ribose 1-diphosphate: step 2/2. The sequence is that of Phosphoribosylamine--glycine ligase from Nostoc sp. (strain PCC 7120 / SAG 25.82 / UTEX 2576).